We begin with the raw amino-acid sequence, 237 residues long: Orotidine 5'-phosphate decarboxylase (237 aa).

Substrate is bound by residues D10, K33, D60–T69, T123, R185, Q194, G214, and R215. K62 (proton donor) is an active-site residue.

This sequence belongs to the OMP decarboxylase family. Type 1 subfamily. As to quaternary structure, homodimer.

It carries out the reaction orotidine 5'-phosphate + H(+) = UMP + CO2. It functions in the pathway pyrimidine metabolism; UMP biosynthesis via de novo pathway; UMP from orotate: step 2/2. Functionally, catalyzes the decarboxylation of orotidine 5'-monophosphate (OMP) to uridine 5'-monophosphate (UMP). The chain is Orotidine 5'-phosphate decarboxylase from Enterococcus faecalis (strain ATCC 700802 / V583).